A 471-amino-acid chain; its full sequence is Secretogranin-3 (471 aa).

The first 22 residues, Met-1–Ala-22, serve as a signal peptide directing secretion. 2 disordered regions span residues Phe-23–Tyr-72 and Glu-86–Lys-105. The span at Lys-32–Leu-45 shows a compositional bias: basic and acidic residues. Ser-40 is modified (phosphoserine). A glycan (O-linked (Xyl...) (chondroitin sulfate) serine) is linked at Ser-40. Residue Asn-71 is glycosylated (N-linked (GlcNAc...) asparagine). A compositionally biased stretch (basic and acidic residues) spans Glu-86 to Ser-96. The N-linked (GlcNAc...) asparagine glycan is linked to Asn-353. Residues Leu-357 to Glu-409 form a disordered region. Over residues Glu-363–Glu-409 the composition is skewed to basic and acidic residues. Position 365 is a phosphoserine (Ser-365).

In terms of assembly, interacts with CHGA. Interacts with secretogranin II/SCG2. Interacts (via C-terminus) with CPE.

It is found in the cytoplasmic vesicle. The protein resides in the secretory vesicle. It localises to the secretory vesicle membrane. Its subcellular location is the secreted. Functionally, member of the granin protein family that regulates the biogenesis of secretory granules. Acts as a sorting receptor for intragranular proteins including chromogranin A/CHGA. May also play a role in angiogenesis. Promotes endothelial proliferation, migration and tube formation through MEK/ERK signaling pathway. The protein is Secretogranin-3 (SCG3) of Bos taurus (Bovine).